The chain runs to 525 residues: Glutamate--cysteine ligase (525 aa).

It belongs to the glutamate--cysteine ligase type 1 family. Type 1 subfamily.

It carries out the reaction L-cysteine + L-glutamate + ATP = gamma-L-glutamyl-L-cysteine + ADP + phosphate + H(+). The protein operates within sulfur metabolism; glutathione biosynthesis; glutathione from L-cysteine and L-glutamate: step 1/2. The chain is Glutamate--cysteine ligase from Vibrio vulnificus (strain CMCP6).